The following is a 185-amino-acid chain: Ribosome-recycling factor (185 aa).

Residues 140–166 form a disordered region; that stretch reads KRQEKDGDITEDEQRSLEKQVQKVTDD.

It belongs to the RRF family.

It localises to the cytoplasm. In terms of biological role, responsible for the release of ribosomes from messenger RNA at the termination of protein biosynthesis. May increase the efficiency of translation by recycling ribosomes from one round of translation to another. This Lactobacillus johnsonii (strain CNCM I-12250 / La1 / NCC 533) protein is Ribosome-recycling factor.